The sequence spans 176 residues: ATP-dependent protease subunit HslV (176 aa).

Thr2 is a catalytic residue. The Na(+) site is built by Ala157, Cys160, and Thr163.

It belongs to the peptidase T1B family. HslV subfamily. A double ring-shaped homohexamer of HslV is capped on each side by a ring-shaped HslU homohexamer. The assembly of the HslU/HslV complex is dependent on binding of ATP.

It is found in the cytoplasm. The enzyme catalyses ATP-dependent cleavage of peptide bonds with broad specificity.. Allosterically activated by HslU binding. Functionally, protease subunit of a proteasome-like degradation complex believed to be a general protein degrading machinery. The chain is ATP-dependent protease subunit HslV from Buchnera aphidicola subsp. Acyrthosiphon pisum (strain APS) (Acyrthosiphon pisum symbiotic bacterium).